The primary structure comprises 407 residues: Protein phosphatase methylesterase 1 (407 aa).

Positions 1–53 (MSDLQKSFAKSKLAKLPPEPPPIPESVADEDDDSGSSTETVTPSPVKQLFARP) are disordered. Residues Ser185, Asp211, and His342 contribute to the active site. The segment covering 388 to 401 (GAGVPLGKAEGGTT) has biased composition (gly residues). Positions 388–407 (GAGVPLGKAEGGTTGSFKRS) are disordered.

The protein belongs to the AB hydrolase superfamily.

It catalyses the reaction [phosphatase 2A protein]-C-terminal L-leucine methyl ester + H2O = [phosphatase 2A protein]-C-terminal L-leucine + methanol + H(+). Demethylates proteins that have been reversibly carboxymethylated. Demethylates the phosphatase PP2A catalytic subunit. This Emericella nidulans (strain FGSC A4 / ATCC 38163 / CBS 112.46 / NRRL 194 / M139) (Aspergillus nidulans) protein is Protein phosphatase methylesterase 1 (ppe1).